Consider the following 332-residue polypeptide: Glycerol-3-phosphate dehydrogenase [NAD(P)+] (332 aa).

NADPH is bound by residues Trp13, Lys34, and Lys108. Residues Lys108, Gly136, and Ser138 each coordinate sn-glycerol 3-phosphate. Residue Ala140 coordinates NADPH. Residues Lys191, Asp244, Ser254, Arg255, and Asn256 each contribute to the sn-glycerol 3-phosphate site. The active-site Proton acceptor is Lys191. An NADPH-binding site is contributed by Arg255. 2 residues coordinate NADPH: Val279 and Glu281.

Belongs to the NAD-dependent glycerol-3-phosphate dehydrogenase family.

The protein localises to the cytoplasm. It catalyses the reaction sn-glycerol 3-phosphate + NAD(+) = dihydroxyacetone phosphate + NADH + H(+). The enzyme catalyses sn-glycerol 3-phosphate + NADP(+) = dihydroxyacetone phosphate + NADPH + H(+). The protein operates within membrane lipid metabolism; glycerophospholipid metabolism. In terms of biological role, catalyzes the reduction of the glycolytic intermediate dihydroxyacetone phosphate (DHAP) to sn-glycerol 3-phosphate (G3P), the key precursor for phospholipid synthesis. This is Glycerol-3-phosphate dehydrogenase [NAD(P)+] from Francisella tularensis subsp. tularensis (strain FSC 198).